Consider the following 300-residue polypeptide: Acetylglutamate kinase (300 aa).

Residues 73 to 74 (GG), Arg95, and Asn197 each bind substrate.

Belongs to the acetylglutamate kinase family. ArgB subfamily.

It localises to the cytoplasm. The catalysed reaction is N-acetyl-L-glutamate + ATP = N-acetyl-L-glutamyl 5-phosphate + ADP. Its pathway is amino-acid biosynthesis; L-arginine biosynthesis; N(2)-acetyl-L-ornithine from L-glutamate: step 2/4. Catalyzes the ATP-dependent phosphorylation of N-acetyl-L-glutamate. The sequence is that of Acetylglutamate kinase from Bordetella parapertussis (strain 12822 / ATCC BAA-587 / NCTC 13253).